A 265-amino-acid polypeptide reads, in one-letter code: Tryptophan synthase alpha chain (265 aa).

Residues E49 and E60 each act as proton acceptor in the active site.

Belongs to the TrpA family. Tetramer of two alpha and two beta chains.

The enzyme catalyses (1S,2R)-1-C-(indol-3-yl)glycerol 3-phosphate + L-serine = D-glyceraldehyde 3-phosphate + L-tryptophan + H2O. The protein operates within amino-acid biosynthesis; L-tryptophan biosynthesis; L-tryptophan from chorismate: step 5/5. Its function is as follows. The alpha subunit is responsible for the aldol cleavage of indoleglycerol phosphate to indole and glyceraldehyde 3-phosphate. The polypeptide is Tryptophan synthase alpha chain (Herminiimonas arsenicoxydans).